The sequence spans 1113 residues: Histone deacetylase 5 (1113 aa).

The disordered stretch occupies residues 1–22 (MNSPNESDGMSGREPSLGILPR). K35 is covalently cross-linked (Glycyl lysine isopeptide (Lys-Gly) (interchain with G-Cter in SUMO2)). Disordered stretches follow at residues 39–63 (PGAM…RGAL) and 187–272 (KEPT…SSPL). The segment covering 238–249 (DSRDDFPLRKTA) has biased composition (basic and acidic residues). S250 carries the post-translational modification Phosphoserine; by AMPK, CaMK1, SIK1 and PKD/PRKD1. Residues 263 to 272 (KVAERRSSPL) are compositionally biased toward basic and acidic residues. A Phosphothreonine; by PKC modification is found at T283. Positions 472–494 (RTVGKLPRHRPLSRTQSSPLPQS) are disordered. Low complexity predominate over residues 484–494 (SRTQSSPLPQS). Position 488 is a phosphoserine; by AMPK, CaMK1, SIK1 and PKD/PRKD1 (S488). K523 carries the post-translational modification N6-acetyllysine. The disordered stretch occupies residues 526–611 (TKTGELSRQP…PDEGPDLEES (86 aa)). The segment covering 571–610 (STQEDLEEEEEEEEEEEEDCIQVKDEDGESGPDEGPDLEE) has biased composition (acidic residues). Phosphoserine occurs at positions 600 and 650. Residues 675–1019 (GVVYDTFMLK…VSALLSVELQ (345 aa)) form a histone deacetylase region. Zn(2+) contacts are provided by C687, C689, H695, and C772. Residue H824 is part of the active site. A Nuclear export signal motif is present at residues 1072–1113 (EEAETVSAMALLSVGAEQAQAVATQEHSPRPAEEPMEQEPAL). The segment at 1088–1113 (EQAQAVATQEHSPRPAEEPMEQEPAL) is disordered. At S1099 the chain carries Phosphoserine.

This sequence belongs to the histone deacetylase family. HD type 2 subfamily. Interacts with AHRR, BAHD1, BCOR, HDAC7, HDAC9, CTBP1, MEF2C, NCOR2, NRIP1, PHB2 and a 14-3-3 chaperone protein. Interacts with BCL6, DDIT3/CHOP, GRK5, KDM5B and MYOCD. Interacts with EP300 in the presence of TFAP2C. Interacts with ANKRA2. Interacts with CUL7 (as part of the 3M complex); negatively regulated by ANKRA2. Interacts with ZBTB7B; the interaction allows the recruitment of HDAC4 on CD8 loci for deacetylation and possible inhibition of CD8 genes expression. Interacts with RARA. Post-translationally, phosphorylated by AMPK, CaMK1, SIK1 and PRKD1 at Ser-250 and Ser-488. The phosphorylation is required for the export to the cytoplasm and inhibition. Phosphorylated by the PKC kinases PKN1 and PKN2, impairing nuclear import. Phosphorylated by GRK5, leading to nuclear export of HDAC5 and allowing MEF2-mediated transcription. In terms of processing, ubiquitinated. Polyubiquitination however does not lead to its degradation.

It localises to the nucleus. The protein localises to the cytoplasm. It catalyses the reaction N(6)-acetyl-L-lysyl-[histone] + H2O = L-lysyl-[histone] + acetate. Functionally, responsible for the deacetylation of lysine residues on the N-terminal part of the core histones (H2A, H2B, H3 and H4). Histone deacetylation gives a tag for epigenetic repression and plays an important role in transcriptional regulation, cell cycle progression and developmental events. Histone deacetylases act via the formation of large multiprotein complexes. Involved in muscle maturation by repressing transcription of myocyte enhancer MEF2C. During muscle differentiation, it shuttles into the cytoplasm, allowing the expression of myocyte enhancer factors. Serves as a corepressor of RARA and causes its deacetylation. In association with RARA, plays a role in the repression of microRNA-10a and thereby in the inflammatory response. The sequence is that of Histone deacetylase 5 (Hdac5) from Mus musculus (Mouse).